The chain runs to 880 residues: MVYPGPPGLIAGLLLAALSLSCVDGAKALGFVGHGYNLTVSQGHEAKLNCSLQGIEEPEIQWLKDGVPVQSADQMYIPVDEDHWISFLSLKNVERPDAGKYWCEAEHSGRKSVSDAIWIMVEGVPYFTLEPKDLSVTPNSPFNMTCAAVGPPEPLVIIWWVGDSPLGKSESSPSVLQMSGIHERTAFSCEAHNAKGVSSSRTAIVEVKGLPYPPFNVTISKVTGSTATVTWFPGFNSFSLIKSCTIQVQSLHGNREMYSRLISAPPFAVLLDELQPLTNHSVRVQCTNEMGASPFTEWRTFHTKETVPQLLPQNVHMTKTETSLLLDWEEVEPDREGYNILGFKVQWEQENATQGELFVQENQANLTKWNPEKDLTIRICIANAAGCGPWSEFLLAGSKEEAGKQRHPHTRMSWVPMVLGILTALVTVVAMTLIFLRKGRKETRFGNMLGSMLGRGGPVIQFTAARSFNRRGPEMMEATLDSIGISEELKSKLKDVLIQQQQFTLGRTLGKGEFGSVREAQLKMEDDTMQKVAVKMLKAEIFCSSDIEEFLREAAFMKEFDHPNVCKLIGVSLRSRTKGRLPVPMVILPFMKHGDLHTFLLMSRIGEEPITLPVQTLVRFMIDICSGMEYLSSKNFIHRDLATRNCMLNEDMTVCVADFGLSKKIYSGDYYRQGCASKLPVKWLALESLADNVYTVHSDVWAFGVTLWEIATLGQTPYAGVENSEIYSYLIAGNRLKQPLDCLDELYEMMCQCWITEPKRRPSFVDLKQRLEAIWGRLSILSASQDQLYVNLGETCGAAAAVSGLHSAFCSEEDYCAGPSQTCGTSAITSDYRYIVNPGCLREGNEWSSSAQNGEARGLLHEEEEEEEEEMQEEQVVITL.

The signal sequence occupies residues 1 to 28 (MVYPGPPGLIAGLLLAALSLSCVDGAKA). Ig-like C2-type domains follow at residues 29–114 (LGFV…KSVS) and 125–206 (PYFT…AIVE). Over 29–414 (LGFVGHGYNL…QRHPHTRMSW (386 aa)) the chain is Extracellular. Asparagine 37 and asparagine 49 each carry an N-linked (GlcNAc...) asparagine glycan. An intrachain disulfide couples cysteine 50 to cysteine 103. Asparagine 143 carries N-linked (GlcNAc...) asparagine glycosylation. Residues cysteine 146 and cysteine 189 are joined by a disulfide bond. 2 Fibronectin type-III domains span residues 213–306 (PPFN…TKET) and 311–401 (LPQN…SKEE). Residues asparagine 216, asparagine 279, asparagine 351, and asparagine 365 are each glycosylated (N-linked (GlcNAc...) asparagine). A helical transmembrane segment spans residues 415 to 435 (VPMVLGILTALVTVVAMTLIF). The Cytoplasmic segment spans residues 436–880 (LRKGRKETRF…MQEEQVVITL (445 aa)). The Protein kinase domain occupies 503 to 774 (FTLGRTLGKG…VDLKQRLEAI (272 aa)). ATP-binding positions include 509-517 (LGKGEFGSV) and lysine 535. The active-site Proton acceptor is the aspartate 640. Residue tyrosine 671 is modified to Phosphotyrosine; by autocatalysis. The segment at 846-880 (EWSSSAQNGEARGLLHEEEEEEEEEMQEEQVVITL) is disordered. Residues 862-873 (EEEEEEEEEMQE) show a composition bias toward acidic residues.

It belongs to the protein kinase superfamily. Tyr protein kinase family. AXL/UFO subfamily. Tyrosine phosphorylated upon receptor stimulation. In terms of tissue distribution, detected in brain, spinal cord, intestine, lung, stomach, ovary, testis, skin and eye.

Its subcellular location is the cell membrane. It catalyses the reaction L-tyrosyl-[protein] + ATP = O-phospho-L-tyrosyl-[protein] + ADP + H(+). May be involved in cell adhesion processes, particularly in the central nervous system. The sequence is that of Tyrosine-protein kinase receptor TYRO3 (tyro3) from Xenopus laevis (African clawed frog).